Here is a 315-residue protein sequence, read N- to C-terminus: Calumenin (315 aa).

A signal peptide spans 1–19; sequence MDLRQFLMCLSLCTAFALS. Position 44 is a phosphoserine (serine 44). Tyrosine 47 carries the post-translational modification Phosphotyrosine. Threonine 65 carries the phosphothreonine modification. EF-hand domains lie at 68-103, 104-139, 151-186, 188-223, 229-264, and 265-300; these read ESKERLGMIVDKIDADKDGFVTEGELKSWIKHAQKK, YIYDNVENQWQEFDLNQDGLISWDEYRNVTYGTYLD, QMMVRDERRFKMADKDGDLIATKEEFTAFLHPEEYD, MKDIVVQEPMEDIDKNADGFIDLEEYIGDMYSHDGN, WVKTEREQFVEFRDKNRDGKMDKEETKDWILPSDYD, and HAEAEARHLVYESDQNKDGKLTKEEIVDKYDLFVGS. Serine 69 carries the phosphoserine modification. Residues aspartate 81, aspartate 83, aspartate 85, glutamate 92, aspartate 117, asparagine 119, aspartate 121, and glutamate 128 each coordinate Ca(2+). Asparagine 131 carries N-linked (GlcNAc...) asparagine glycosylation. Aspartate 164 is a binding site for Ca(2+). The residue at position 165 (lysine 165) is an N6-acetyllysine. Ca(2+) is bound by residues aspartate 166, aspartate 168, glutamate 175, aspartate 201, asparagine 203, aspartate 205, glutamate 212, aspartate 242, asparagine 244, aspartate 246, lysine 248, and glutamate 253. Threonine 254 bears the Phosphothreonine mark. A phosphoserine mark is found at serine 261 and serine 277. The Ca(2+) site is built by aspartate 278, asparagine 280, aspartate 282, lysine 284, and glutamate 289. Positions 312 to 315 match the Prevents secretion from ER motif; sequence HDEF.

This sequence belongs to the CREC family. In terms of assembly, interacts with GGCX.

The protein resides in the endoplasmic reticulum membrane. It is found in the golgi apparatus. It localises to the secreted. The protein localises to the melanosome. Its subcellular location is the sarcoplasmic reticulum lumen. Involved in regulation of vitamin K-dependent carboxylation of multiple N-terminal glutamate residues. Seems to inhibit gamma-carboxylase GGCX. Binds 7 calcium ions with a low affinity. In Bos taurus (Bovine), this protein is Calumenin (CALU).